A 95-amino-acid polypeptide reads, in one-letter code: Integration host factor subunit beta (95 aa).

Belongs to the bacterial histone-like protein family. In terms of assembly, heterodimer of an alpha and a beta chain.

This protein is one of the two subunits of integration host factor, a specific DNA-binding protein that functions in genetic recombination as well as in transcriptional and translational control. Involved in hydrogenase gene expression. The protein is Integration host factor subunit beta (ihfB) of Rhodobacter capsulatus (Rhodopseudomonas capsulata).